The sequence spans 371 residues: 4-hydroxyphenylpyruvate dioxygenase-like protein (371 aa).

2 VOC domains span residues 7–135 and 160–328; these read RLCH…LLQR and HVDH…VFTK. The Fe cation site is built by histidine 163, histidine 258, and glutamate 339.

This sequence belongs to the 4HPPD family. Fe cation serves as cofactor.

It localises to the mitochondrion. It carries out the reaction 3-(4-hydroxyphenyl)pyruvate + O2 = (S)-4-hydroxymandelate + CO2. Its function is as follows. Iron-dependent dioxygenase that catalyzes the conversion of 4-hydroxyphenylpyruvate (4-HPPA) to 4-hydroxymandelate (4-HMA) in the mitochondria, one of the steps in the biosynthesis of coenzyme Q10 from tyrosine. The polypeptide is 4-hydroxyphenylpyruvate dioxygenase-like protein (Rattus norvegicus (Rat)).